Consider the following 319-residue polypeptide: Inositol-tetrakisphosphate 1-kinase 1 (319 aa).

An N-acetylserine modification is found at S2. 2 residues coordinate 1D-myo-inositol 1,3,4-trisphosphate: K18 and K60. 2 residues coordinate ATP: R95 and K145. The 220-residue stretch at 99–318 folds into the ATP-grasp domain; it reads LEVITQLRFP…FWDMVTKKNH (220 aa). H156 and K188 together coordinate 1D-myo-inositol 1,3,4-trisphosphate. Residues 177-188 and S203 each bind ATP; that span reads QEFVNHGGVIFK. Mg(2+) is bound by residues D273, D288, and N290. N290 contributes to the 1D-myo-inositol 1,3,4-trisphosphate binding site.

This sequence belongs to the ITPK1 family. In terms of assembly, monomer. Requires Mg(2+) as cofactor. In terms of tissue distribution, expressed in siliques.

It catalyses the reaction 1D-myo-inositol 3,4,5,6-tetrakisphosphate + ATP = 1D-myo-inositol 1,3,4,5,6-pentakisphosphate + ADP + H(+). The catalysed reaction is 1D-myo-inositol 1,3,4-trisphosphate + ATP = 1D-myo-inositol 1,3,4,5-tetrakisphosphate + ADP + H(+). The enzyme catalyses 1D-myo-inositol 1,3,4-trisphosphate + ATP = 1D-myo-inositol 1,3,4,6-tetrakisphosphate + ADP + H(+). Functionally, kinase that can phosphorylate various inositol polyphosphate such as Ins(3,4,5,6)P4 or Ins(1,3,4)P3. Phosphorylates Ins(3,4,5,6)P4 at position 1 to form Ins(1,3,4,5,6)P5. This reaction is thought to have regulatory importance, since Ins(3,4,5,6)P4 is an inhibitor of plasma membrane Ca(2+)-activated Cl(-) channels, while Ins(1,3,4,5,6)P5 is not. Also phosphorylates Ins(1,3,4)P3 on O-5 and O-6 to form Ins(1,3,4,6)P4, an essential molecule in the hexakisphosphate (InsP6) pathway. This Arabidopsis thaliana (Mouse-ear cress) protein is Inositol-tetrakisphosphate 1-kinase 1 (ITPK1).